An 892-amino-acid polypeptide reads, in one-letter code: E3 ubiquitin ligase PQT3-like (892 aa).

Residues 3–76 (IYYKFKSARD…NTSVLIRRVP (74 aa)) enclose the DWNN domain. The segment at 210–224 (CHRCNIPGHFIQHCP) adopts a CCHC-type zinc-finger fold. Ser285 is modified (phosphoserine). The RING-type; degenerate zinc-finger motif lies at 295-333 (CPLCKEVMKDAALTSKCCYKSFCDKCIRDHIISKSMCVC). 3 disordered regions span residues 375–408 (DLES…NNND), 459–493 (TQAP…MQWN), and 623–892 (MLRK…RSRA). At Ser404 the chain carries Phosphoserine. Positions 623 to 644 (MLRKRENERRPEGGKMFRDGEN) are enriched in basic and acidic residues. Residues 647-666 (MMMNNGTSASASSINPNKSR) are compositionally biased toward polar residues. Residues 674 to 692 (HDYDRRRRPEKRLSPEHPP) are compositionally biased toward basic and acidic residues. Positions 693-700 (TRKNISPS) match the Nuclear localization signal motif. The span at 708 to 745 (ERYPDERDRQRDRERSRHQDVDREHDRTRDRRDEDRSR) shows a compositional bias: basic and acidic residues. A compositionally biased stretch (low complexity) spans 810 to 832 (SSSSTSVTDPSASASAAAAVGTS). Ser866 is modified (phosphoserine). Positions 875-892 (SEDKLRYSKRGKGERSRA) are enriched in basic and acidic residues.

It localises to the nucleus. The enzyme catalyses S-ubiquitinyl-[E2 ubiquitin-conjugating enzyme]-L-cysteine + [acceptor protein]-L-lysine = [E2 ubiquitin-conjugating enzyme]-L-cysteine + N(6)-ubiquitinyl-[acceptor protein]-L-lysine.. The polypeptide is E3 ubiquitin ligase PQT3-like (Arabidopsis thaliana (Mouse-ear cress)).